The primary structure comprises 266 residues: F-actin-capping protein subunit beta (266 aa).

It belongs to the F-actin-capping protein beta subunit family. In terms of assembly, component of the F-actin capping complex, composed of a heterodimer of an alpha and a beta subunit.

The protein resides in the cytoplasm. It is found in the cytoskeleton. The protein localises to the actin patch. In terms of biological role, F-actin-capping proteins bind in a Ca(2+)-independent manner to the fast growing ends of actin filaments (barbed end) thereby blocking the exchange of subunits at these ends. Unlike other capping proteins (such as gelsolin and severin), these proteins do not sever actin filaments. The sequence is that of F-actin-capping protein subunit beta (cap2) from Aspergillus oryzae (strain ATCC 42149 / RIB 40) (Yellow koji mold).